Consider the following 1375-residue polypeptide: ARF guanine-nucleotide exchange factor GNL2 (1375 aa).

In terms of domain architecture, SEC7 spans 486–676; it reads HIRVRKAQKR…SELFQSIATN (191 aa). Residue Glu-590 is part of the active site.

In terms of assembly, homodimer. Preferentially expressed in mature pollen grains and growing pollen tubes.

The protein resides in the cytoplasm. Its subcellular location is the cytosol. It is found in the membrane. In terms of biological role, activates the ARF proteins by exchanging bound GDP for free GTP. Plays a role in vesicular protein sorting. Essential for pollen germination. The chain is ARF guanine-nucleotide exchange factor GNL2 (GNL2) from Arabidopsis thaliana (Mouse-ear cress).